The primary structure comprises 344 residues: N-acetyl-gamma-glutamyl-phosphate reductase (344 aa).

The active site involves C150.

It belongs to the NAGSA dehydrogenase family. Type 1 subfamily.

The protein resides in the cytoplasm. It catalyses the reaction N-acetyl-L-glutamate 5-semialdehyde + phosphate + NADP(+) = N-acetyl-L-glutamyl 5-phosphate + NADPH + H(+). It participates in amino-acid biosynthesis; L-arginine biosynthesis; N(2)-acetyl-L-ornithine from L-glutamate: step 3/4. Functionally, catalyzes the NADPH-dependent reduction of N-acetyl-5-glutamyl phosphate to yield N-acetyl-L-glutamate 5-semialdehyde. The sequence is that of N-acetyl-gamma-glutamyl-phosphate reductase from Ectopseudomonas mendocina (strain ymp) (Pseudomonas mendocina).